Consider the following 111-residue polypeptide: MEAKAILRTARISPQKARLVADQVRGLSAERAVNLLKFSDKKAAHLIKKVVESAIANAENNQGADVDELKVKTIMVDEGPSLKRFMARAKGRGTRILKRTSHITVVVGAAK.

Belongs to the universal ribosomal protein uL22 family. In terms of assembly, part of the 50S ribosomal subunit.

In terms of biological role, this protein binds specifically to 23S rRNA; its binding is stimulated by other ribosomal proteins, e.g. L4, L17, and L20. It is important during the early stages of 50S assembly. It makes multiple contacts with different domains of the 23S rRNA in the assembled 50S subunit and ribosome. Its function is as follows. The globular domain of the protein is located near the polypeptide exit tunnel on the outside of the subunit, while an extended beta-hairpin is found that lines the wall of the exit tunnel in the center of the 70S ribosome. The sequence is that of Large ribosomal subunit protein uL22 from Xanthomonas euvesicatoria pv. vesicatoria (strain 85-10) (Xanthomonas campestris pv. vesicatoria).